A 482-amino-acid chain; its full sequence is Adenylyltransferase and sulfurtransferase MOCS3-2 (482 aa).

Residues glycine 125, aspartate 146, 153–157 (NNLHR), lysine 170, and 214–215 (DN) contribute to the ATP site. 2 residues coordinate Zn(2+): cysteine 255 and cysteine 258. Cysteine 272 acts as the Glycyl thioester intermediate; for adenylyltransferase activity in catalysis. The Zn(2+) site is built by cysteine 330 and cysteine 333. The region spanning 385–480 (DGEPHLLLDV…WGQDVDPDFP (96 aa)) is the Rhodanese domain. Residue cysteine 440 is the Cysteine persulfide intermediate; for sulfurtransferase activity of the active site.

This sequence in the N-terminal section; belongs to the HesA/MoeB/ThiF family. UBA4 subfamily. It depends on Zn(2+) as a cofactor.

The protein resides in the cytoplasm. It carries out the reaction [molybdopterin-synthase sulfur-carrier protein]-C-terminal Gly-Gly + ATP + H(+) = [molybdopterin-synthase sulfur-carrier protein]-C-terminal Gly-Gly-AMP + diphosphate. It catalyses the reaction [molybdopterin-synthase sulfur-carrier protein]-C-terminal Gly-Gly-AMP + S-sulfanyl-L-cysteinyl-[cysteine desulfurase] + AH2 = [molybdopterin-synthase sulfur-carrier protein]-C-terminal-Gly-aminoethanethioate + L-cysteinyl-[cysteine desulfurase] + A + AMP + 2 H(+). The protein operates within tRNA modification; 5-methoxycarbonylmethyl-2-thiouridine-tRNA biosynthesis. It participates in cofactor biosynthesis; molybdopterin biosynthesis. In terms of biological role, plays a central role in 2-thiolation of mcm(5)S(2)U at tRNA wobble positions of cytosolic tRNA(Lys), tRNA(Glu) and tRNA(Gln). Also essential during biosynthesis of the molybdenum cofactor. Acts by mediating the C-terminal thiocarboxylation of sulfur carriers URM1 and MOCS2A. Its N-terminus first activates URM1 and MOCS2A as acyl-adenylates (-COAMP), then the persulfide sulfur on the catalytic cysteine is transferred to URM1 and MOCS2A to form thiocarboxylation (-COSH) of their C-terminus. The reaction probably involves hydrogen sulfide that is generated from the persulfide intermediate and that acts as a nucleophile towards URM1 and MOCS2A. Subsequently, a transient disulfide bond is formed. Does not use thiosulfate as sulfur donor; NFS1 probably acting as a sulfur donor for thiocarboxylation reactions. The sequence is that of Adenylyltransferase and sulfurtransferase MOCS3-2 from Zea mays (Maize).